Consider the following 249-residue polypeptide: Aspartate/glutamate leucyltransferase (249 aa).

The protein belongs to the R-transferase family. Bpt subfamily.

It localises to the cytoplasm. The enzyme catalyses N-terminal L-glutamyl-[protein] + L-leucyl-tRNA(Leu) = N-terminal L-leucyl-L-glutamyl-[protein] + tRNA(Leu) + H(+). It catalyses the reaction N-terminal L-aspartyl-[protein] + L-leucyl-tRNA(Leu) = N-terminal L-leucyl-L-aspartyl-[protein] + tRNA(Leu) + H(+). Its function is as follows. Functions in the N-end rule pathway of protein degradation where it conjugates Leu from its aminoacyl-tRNA to the N-termini of proteins containing an N-terminal aspartate or glutamate. The sequence is that of Aspartate/glutamate leucyltransferase from Azorhizobium caulinodans (strain ATCC 43989 / DSM 5975 / JCM 20966 / LMG 6465 / NBRC 14845 / NCIMB 13405 / ORS 571).